The chain runs to 341 residues: HMG box-containing protein C10F6.08c (341 aa).

A compositionally biased stretch (basic and acidic residues) spans 68–77; that stretch reads SEAKSREFGQ. Disordered stretches follow at residues 68–195 and 236–341; these read SEAK…SNAK and LTEE…SSNA. Composition is skewed to polar residues over residues 116 to 157 and 165 to 177; these read DTNV…QVVQ and NTDP…ITNL. Residues 178 to 195 show a composition bias toward low complexity; the sequence is KTESSKSSGAKKATSNAK. A DNA-binding region (HMG box) is located at residues 195 to 263; it reads KITDTMLFNH…KAREARRRRS (69 aa). 2 stretches are compositionally biased toward basic and acidic residues: residues 238–256 and 269–304; these read EEEK…EKAR and KLEK…GQKE. Residues threonine 314 and threonine 315 each carry the phosphothreonine modification. At serine 316 the chain carries Phosphoserine.

It localises to the nucleus. In Schizosaccharomyces pombe (strain 972 / ATCC 24843) (Fission yeast), this protein is HMG box-containing protein C10F6.08c.